Consider the following 275-residue polypeptide: Diaminopimelate epimerase (275 aa).

Residues asparagine 13, glutamine 46, and asparagine 66 each contribute to the substrate site. Cysteine 75 serves as the catalytic Proton donor. Residues 76–77 (GN), asparagine 159, asparagine 192, and 210–211 (ER) each bind substrate. The active-site Proton acceptor is the cysteine 219. Residue 220 to 221 (GS) participates in substrate binding.

It belongs to the diaminopimelate epimerase family. As to quaternary structure, homodimer.

It localises to the cytoplasm. The catalysed reaction is (2S,6S)-2,6-diaminopimelate = meso-2,6-diaminopimelate. It functions in the pathway amino-acid biosynthesis; L-lysine biosynthesis via DAP pathway; DL-2,6-diaminopimelate from LL-2,6-diaminopimelate: step 1/1. In terms of biological role, catalyzes the stereoinversion of LL-2,6-diaminopimelate (L,L-DAP) to meso-diaminopimelate (meso-DAP), a precursor of L-lysine and an essential component of the bacterial peptidoglycan. The chain is Diaminopimelate epimerase from Idiomarina loihiensis (strain ATCC BAA-735 / DSM 15497 / L2-TR).